Here is a 343-residue protein sequence, read N- to C-terminus: Dihydroorotate dehydrogenase (quinone) (343 aa).

FMN is bound by residues 65–69 (AGFDK) and T89. Residue K69 coordinates substrate. 114–118 (NRMGF) lines the substrate pocket. Positions 145 and 178 each coordinate FMN. N178 contacts substrate. Catalysis depends on S181, which acts as the Nucleophile. Residue N183 participates in substrate binding. The FMN site is built by K215 and T243. Position 244-245 (244-245 (NT)) interacts with substrate. FMN contacts are provided by residues G269, G298, and 319–320 (YT).

It belongs to the dihydroorotate dehydrogenase family. Type 2 subfamily. In terms of assembly, monomer. FMN serves as cofactor.

Its subcellular location is the cell membrane. It carries out the reaction (S)-dihydroorotate + a quinone = orotate + a quinol. It functions in the pathway pyrimidine metabolism; UMP biosynthesis via de novo pathway; orotate from (S)-dihydroorotate (quinone route): step 1/1. Catalyzes the conversion of dihydroorotate to orotate with quinone as electron acceptor. The sequence is that of Dihydroorotate dehydrogenase (quinone) from Leifsonia xyli subsp. xyli (strain CTCB07).